The primary structure comprises 389 residues: Gibberellin 20 oxidase 2 (389 aa).

Positions 1 to 17 (MVAEHPTPPQPHQPPPM) are enriched in pro residues. A disordered region spans residues 1 to 23 (MVAEHPTPPQPHQPPPMDSTAGS). The region spanning 224–324 (DSSSIMRCNY…RRSLAFFLCP (101 aa)) is the Fe2OG dioxygenase domain. Positions 249, 251, and 305 each coordinate Fe cation. Residue Arg-315 is part of the active site.

Belongs to the iron/ascorbate-dependent oxidoreductase family. GA20OX subfamily. Requires Fe cation as cofactor. L-ascorbate serves as cofactor.

The catalysed reaction is gibberellin A12 + 2 2-oxoglutarate + 3 O2 + H(+) = gibberellin A9 + 2 succinate + 3 CO2 + 2 H2O. The enzyme catalyses gibberellin A53 + 2 2-oxoglutarate + 3 O2 + H(+) = gibberellin A20 + 2 succinate + 3 CO2 + 2 H2O. Its function is as follows. Key oxidase enzyme in the biosynthesis of gibberellin that catalyzes the conversion of GA53 to GA20 via a three-step oxidation at C-20 of the GA skeleton. The sequence is that of Gibberellin 20 oxidase 2 (20ox2) from Oryza sativa subsp. indica (Rice).